The sequence spans 338 residues: Protein RecA (338 aa).

Residue 68-75 (GPESSGKT) coordinates ATP.

It belongs to the RecA family.

The protein resides in the cytoplasm. In terms of biological role, can catalyze the hydrolysis of ATP in the presence of single-stranded DNA, the ATP-dependent uptake of single-stranded DNA by duplex DNA, and the ATP-dependent hybridization of homologous single-stranded DNAs. It interacts with LexA causing its activation and leading to its autocatalytic cleavage. This is Protein RecA from Citrifermentans bemidjiense (strain ATCC BAA-1014 / DSM 16622 / JCM 12645 / Bem) (Geobacter bemidjiensis).